The chain runs to 1024 residues: Gamma-tubulin complex component 5 (1024 aa).

Disordered regions lie at residues isoleucine 155–cysteine 203 and threonine 521–glutamine 545. The span at threonine 189–cysteine 203 shows a compositional bias: basic and acidic residues. The segment covering alanine 531–serine 543 has biased composition (low complexity).

It belongs to the TUBGCP family. Component of the gamma-tubulin ring complex (gTuRC) consisting of TUBGCP2, TUBGCP3, TUBGCP4, TUBGCP5 and TUBGCP6 and gamma-tubulin TUBG1 or TUBG2. TUBGCP2, TUBGCP3, TUBGCP4, TUBGCP5 and TUBGCP6 assemble in a 5:5:2:1:1 stoichiometry; each is associated with a gamma-tubulin, thereby arranging 14 gamma-tubulins in a helical manner. Gamma-tubulin at the first position is blocked by TUBGCP3 at the last position, allowing 13 protafilaments to grow into a microtubule. The gTuRC (via TUBGCP3 and TUBGCP6) interacts with ACTB and MZT1; the interactions form a luminal bridge that stabilizes the initial structure during complex assembly. The gTuRC (via TUBGCP2) interacts with MZT2A/MZT2B and CDK5RAP2 (via CM1 motif); the interactions play a role in gTuRC activation. In terms of tissue distribution, widely expressed, with highest levels in heart and skeletal muscle and moderate levels in brain.

It is found in the cytoplasm. The protein resides in the cytoskeleton. The protein localises to the microtubule organizing center. It localises to the centrosome. Component of the gamma-tubulin ring complex (gTuRC) which mediates microtubule nucleation. The gTuRC regulates the minus-end nucleation of alpha-beta tubulin heterodimers that grow into microtubule protafilaments, a critical step in centrosome duplication and spindle formation. This Homo sapiens (Human) protein is Gamma-tubulin complex component 5 (TUBGCP5).